The primary structure comprises 98 residues: Aspartyl/glutamyl-tRNA(Asn/Gln) amidotransferase subunit C (98 aa).

This sequence belongs to the GatC family. Heterotrimer of A, B and C subunits.

The catalysed reaction is L-glutamyl-tRNA(Gln) + L-glutamine + ATP + H2O = L-glutaminyl-tRNA(Gln) + L-glutamate + ADP + phosphate + H(+). It carries out the reaction L-aspartyl-tRNA(Asn) + L-glutamine + ATP + H2O = L-asparaginyl-tRNA(Asn) + L-glutamate + ADP + phosphate + 2 H(+). Its function is as follows. Allows the formation of correctly charged Asn-tRNA(Asn) or Gln-tRNA(Gln) through the transamidation of misacylated Asp-tRNA(Asn) or Glu-tRNA(Gln) in organisms which lack either or both of asparaginyl-tRNA or glutaminyl-tRNA synthetases. The reaction takes place in the presence of glutamine and ATP through an activated phospho-Asp-tRNA(Asn) or phospho-Glu-tRNA(Gln). This chain is Aspartyl/glutamyl-tRNA(Asn/Gln) amidotransferase subunit C, found in Roseiflexus castenholzii (strain DSM 13941 / HLO8).